The sequence spans 269 residues: Aminoglycoside N(3)-acetyltransferase III (269 aa).

The protein belongs to the antibiotic N-acetyltransferase family.

The catalysed reaction is a 2-deoxystreptamine antibiotic + acetyl-CoA = an N(3)-acetyl-2-deoxystreptamine antibiotic + CoA + H(+). Functionally, resistance to antibiotics containing the 2-deoxy-streptamine ring including gentamicin, kanamycin, tobramycin, neomycin and apramycin. In Serratia marcescens, this protein is Aminoglycoside N(3)-acetyltransferase III (aac3-Vb).